The sequence spans 572 residues: Proline--tRNA ligase (572 aa).

Belongs to the class-II aminoacyl-tRNA synthetase family. ProS type 1 subfamily. As to quaternary structure, homodimer.

The protein localises to the cytoplasm. The catalysed reaction is tRNA(Pro) + L-proline + ATP = L-prolyl-tRNA(Pro) + AMP + diphosphate. Its function is as follows. Catalyzes the attachment of proline to tRNA(Pro) in a two-step reaction: proline is first activated by ATP to form Pro-AMP and then transferred to the acceptor end of tRNA(Pro). As ProRS can inadvertently accommodate and process non-cognate amino acids such as alanine and cysteine, to avoid such errors it has two additional distinct editing activities against alanine. One activity is designated as 'pretransfer' editing and involves the tRNA(Pro)-independent hydrolysis of activated Ala-AMP. The other activity is designated 'posttransfer' editing and involves deacylation of mischarged Ala-tRNA(Pro). The misacylated Cys-tRNA(Pro) is not edited by ProRS. The polypeptide is Proline--tRNA ligase (Haemophilus influenzae (strain 86-028NP)).